Here is a 428-residue protein sequence, read N- to C-terminus: MDKMKIIGGDRLRGTIKVSGAKNSAVALIPAAILADSPVTIEGLPDISDVHILGSLIEEIGGSFSFDGKEAVIDPTNMVSMPLPNGKVKKLRASYYLMGAMLGRFKRAVVGLPGGCHLGPRPIDQHIKGFEALGATVTNEQGAIYLRAEELRGARIFLDVVSVGATINIMLAAVRAKGRTIIENAAKEPEIIDVATLLSNMGAKIKGAGTDVIRIDGVEKLSGCRHAIIPDRIEAGTYMIAAAATNGEVVVDNVIPQHVESLTAKLREMGVRVETGEDQILVCGTDVLKAVDVKTLVYPGFPTDLQQPFTALLTKANGTSVVTDTIYSARFKHVDELRRMNANVKVEGRSAIVTGPVKLQGAKVKASDLRAGAALVIAGLMAEGVTEITGVEHIDRGYSNLVEKLSDIGATIWREKMTDEEIEQVKNA.

22 to 23 (KN) serves as a coordination point for phosphoenolpyruvate. Residue Arg-92 coordinates UDP-N-acetyl-alpha-D-glucosamine. The Proton donor role is filled by Cys-116. Residue Cys-116 is modified to 2-(S-cysteinyl)pyruvic acid O-phosphothioketal. UDP-N-acetyl-alpha-D-glucosamine contacts are provided by residues 121-125 (RPIDQ), Asp-304, and Ile-326.

This sequence belongs to the EPSP synthase family. MurA subfamily.

Its subcellular location is the cytoplasm. It carries out the reaction phosphoenolpyruvate + UDP-N-acetyl-alpha-D-glucosamine = UDP-N-acetyl-3-O-(1-carboxyvinyl)-alpha-D-glucosamine + phosphate. It participates in cell wall biogenesis; peptidoglycan biosynthesis. Functionally, cell wall formation. Adds enolpyruvyl to UDP-N-acetylglucosamine. This is UDP-N-acetylglucosamine 1-carboxyvinyltransferase 2 from Geobacillus kaustophilus (strain HTA426).